A 274-amino-acid polypeptide reads, in one-letter code: Energy-coupling factor transporter ATP-binding protein EcfA1 (274 aa).

The ABC transporter domain occupies 10 to 241; sequence ASFQGVYFSY…AAELQKIRLD (232 aa). 42 to 49 is an ATP binding site; sequence GHNGSGKS.

It belongs to the ABC transporter superfamily. Energy-coupling factor EcfA family. Forms a stable energy-coupling factor (ECF) transporter complex composed of 2 membrane-embedded substrate-binding proteins (S component), 2 ATP-binding proteins (A component) and 2 transmembrane proteins (T component).

It localises to the cell membrane. Its function is as follows. ATP-binding (A) component of a common energy-coupling factor (ECF) ABC-transporter complex. Unlike classic ABC transporters this ECF transporter provides the energy necessary to transport a number of different substrates. In Mycoplasma pneumoniae (strain ATCC 29342 / M129 / Subtype 1) (Mycoplasmoides pneumoniae), this protein is Energy-coupling factor transporter ATP-binding protein EcfA1.